The sequence spans 887 residues: CWF19-like protein 2 (887 aa).

Positions 1-143 (MEAFSVRFES…DKRTEEECDS (143 aa)) are disordered. The stretch at 11–103 (ASSIEERKEQ…KKQKCQKQSE (93 aa)) forms a coiled coil. The span at 14 to 72 (IEERKEQTRNARAEVLRQAKHNFEKEQRGEERKRLRDEDTWMLPDVHERIEQFSQEHSE) shows a compositional bias: basic and acidic residues. A Phosphoserine modification is found at serine 71. A compositionally biased stretch (basic residues) spans 73–98 (KKKKKKDKHSKKVKKEKKKKRKKQKC). The span at 99 to 110 (QKQSESTDSSAS) shows a compositional bias: low complexity. Basic and acidic residues predominate over residues 124–143 (SDKEKTWKVKDKRTEEECDS). A coiled-coil region spans residues 164 to 254 (SSSLKAEKET…RNFEDIVAEK (91 aa)). Residue lysine 168 forms a Glycyl lysine isopeptide (Lys-Gly) (interchain with G-Cter in SUMO2) linkage. Disordered stretches follow at residues 315–370 (LEME…DEDE) and 405–447 (SEES…GRRE). Positions 342 to 352 (CRRESALRKNQ) are enriched in basic and acidic residues. Residues serine 354 and serine 366 each carry the phosphoserine modification. The segment covering 414-430 (RSDRRQENRKPSDKKPL) has biased composition (basic and acidic residues). Polar residues predominate over residues 433–442 (WSYNANQHST). The residue at position 478 (serine 478) is a Phosphoserine. Residues 495–524 (IKAEMMGNMELAEQLKAQLKEANKFKETQM) adopt a coiled-coil conformation. Residue lysine 597 forms a Glycyl lysine isopeptide (Lys-Gly) (interchain with G-Cter in SUMO2) linkage. Serine 622 is subject to Phosphoserine.

It belongs to the CWF19 family.

This chain is CWF19-like protein 2 (Cwf19l2), found in Mus musculus (Mouse).